The sequence spans 207 residues: Vexin (207 aa).

Residues 65–104 (RDTGDRRWLQTGRLQTARPPGAHPTKTPSRPVGISEPKTS) form a disordered region.

This sequence belongs to the vexin family.

Its subcellular location is the cell membrane. The protein localises to the nucleus. Functionally, required for neurogenesis in the neural plate and retina. Strongly cooperates with neural bHLH factors to promote neurogenesis. This chain is Vexin, found in Mus musculus (Mouse).